The chain runs to 391 residues: Recombination and repair protein (391 aa).

ATP is bound at residue 60-67 (GPSKSFKS). The segment covering 364–374 (KSPESKSKSAA) has biased composition (basic and acidic residues). The tract at residues 364–391 (KSPESKSKSAADLETDLEQLSDMEEFNE) is disordered. A compositionally biased stretch (acidic residues) spans 376-391 (LETDLEQLSDMEEFNE).

The protein belongs to the RecA family.

Its function is as follows. Important in genetic recombination, DNA repair, and replication. Possesses pairing and strand-transfer activity. Interacts with dda and gene 32 proteins. The protein is Recombination and repair protein (UVSX) of Enterobacteria phage T4 (Bacteriophage T4).